Reading from the N-terminus, the 738-residue chain is MCGKSLLCVASLLASAYLVYCTQYVTVFYGVPVWRNASIPLFCATKNRDTWGTIQCKPDNDDYQEITLNVTEAFDAWDNTVTEQAVEDVWSLFETSIKPCVKLTPLCVAMSCNSTTNNTTTTGSTTGMSEINETSPSYSDNCTGLGKEEIVNCQFYMTGLERDKKKQYNETWYSKDVVCESNNTKDGKNRCYMNHCNTSVITESCDKHYWDAIKFRYCAPPGYALLRCNDTNYSGFEPKCSKVVASTCTRMMETQTSTWFGFNGTRAENRTYIYWHGRDNRTIISLNKYYNLSIHCKRPGNKTVVPITLMSGLVFHSQPINTRPRQAWCWFKGKWREAMQEVKQTLIKHPRYKGTNDTKNINFTKPGRGSDPEVAYMWTNCRGEFLYCNMTWFLNWVENRPNQTQHNYAPCHIRQIINTWHKVGKNVYLPPREGQLTCNSTVTSIIANIDVNSNQTNITFSAEVAELYRLELGDYKLIEVTPIGFAPTREKRYSSAPVRNKRGVFVLGFLGFLATAGSAMGAASLTLSAQSRTLLAGIVQQQQQLLDVVKRQQEMLRLTVWGTKNLQARVTAIEKYLKDQAQLNSWGCAFRQVCHTTVPWVNDSLSPDWNNMTWQEWEKQVRYLEANISQSLEQAQIQQEKNMYELQKLNSWDVFGNWFDLTSWIKYIQYGVYIVVGVIVLRIAIYIVQLLSRLRKGYRPVFSSPPGYLQQIHIHTDRGQPANEGTEEDDRDDDGYDL.

A signal peptide spans 1-21; sequence MCGKSLLCVASLLASAYLVYC. Residues 22 to 670 are Extracellular-facing; that stretch reads TQYVTVFYGV…LTSWIKYIQY (649 aa). Asparagine 36 carries an N-linked (GlcNAc...) asparagine; by host glycan. Cysteines 43 and 56 form a disulfide. 23 N-linked (GlcNAc...) asparagine; by host glycosylation sites follow: asparagine 69, asparagine 113, asparagine 117, asparagine 118, asparagine 132, asparagine 141, asparagine 169, asparagine 182, asparagine 197, asparagine 229, asparagine 232, asparagine 263, asparagine 269, asparagine 280, asparagine 291, asparagine 301, asparagine 356, asparagine 362, asparagine 389, asparagine 402, asparagine 439, asparagine 454, and asparagine 457. 5 cysteine pairs are disulfide-bonded: cysteine 100–cysteine 205, cysteine 107–cysteine 196, cysteine 112–cysteine 153, cysteine 218–cysteine 248, and cysteine 228–cysteine 240. The interval 112-152 is V1; it reads CNSTTNNTTTTGSTTGMSEINETSPSYSDNCTGLGKEEIVN. Residues 153–196 are V2; sequence CQFYMTGLERDKKKQYNETWYSKDVVCESNNTKDGKNRCYMNHC. The tract at residues 296–328 is V3; the sequence is CKRPGNKTVVPITLMSGLVFHSQPINTRPRQAW. Cysteine 296 and cysteine 329 form a disulfide bridge. Disulfide bonds link cysteine 381/cysteine 438 and cysteine 388/cysteine 411. The segment at 388-411 is V4; the sequence is CNMTWFLNWVENRPNQTQHNYAPC. The tract at residues 454–460 is V5; sequence NQTNITF. Residues 503 to 523 are fusion peptide; that stretch reads GVFVLGFLGFLATAGSAMGAA. Residues 566–582 are immunosuppression; sequence LQARVTAIEKYLKDQAQ. N-linked (GlcNAc...) asparagine; by host glycans are attached at residues asparagine 602, asparagine 611, and asparagine 627. Residues 615–636 are a coiled coil; the sequence is QEWEKQVRYLEANISQSLEQAQ. The MPER; binding to GalCer stretch occupies residues 648-669; sequence KLNSWDVFGNWFDLTSWIKYIQ. A helical membrane pass occupies residues 671–691; sequence GVYIVVGVIVLRIAIYIVQLL. At 692-738 the chain is on the cytoplasmic side; that stretch reads SRLRKGYRPVFSSPPGYLQQIHIHTDRGQPANEGTEEDDRDDDGYDL. Positions 698 to 701 match the YXXV motif; contains endocytosis signal motif; it reads YRPV. The interval 716-738 is disordered; the sequence is TDRGQPANEGTEEDDRDDDGYDL. Residues 725–738 are compositionally biased toward acidic residues; the sequence is GTEEDDRDDDGYDL.

In terms of assembly, the mature envelope protein (Env) consists of a homotrimer of non-covalently associated gp120-gp41 heterodimers. The resulting complex protrudes from the virus surface as a spike. There seems to be as few as 10 spikes on the average virion. Interacts with human CD4, CCR5 and CXCR4, to form a P4HB/PDI-CD4-CXCR4-gp120 complex. Gp120 also interacts with the C-type lectins CD209/DC-SIGN and CLEC4M/DC-SIGNR (collectively referred to as DC-SIGN(R)). Gp120 and gp41 interact with GalCer. The mature envelope protein (Env) consists of a homotrimer of non-covalently associated gp120-gp41 heterodimers. The resulting complex protrudes from the virus surface as a spike. There seems to be as few as 10 spikes on the average virion. In terms of processing, specific enzymatic cleavages in vivo yield mature proteins. Envelope glycoproteins are synthesized as an inactive precursor that is heavily N-glycosylated and processed likely by host cell furin in the Golgi to yield the mature SU and TM proteins. The cleavage site between SU and TM requires the minimal sequence [KR]-X-[KR]-R. Post-translationally, palmitoylation of the transmembrane protein and of Env polyprotein (prior to its proteolytic cleavage) is essential for their association with host cell membrane lipid rafts. Palmitoylation is therefore required for envelope trafficking to classical lipid rafts, but not for viral replication.

Its subcellular location is the virion membrane. The protein resides in the host cell membrane. The protein localises to the host endosome membrane. Its function is as follows. The surface protein gp120 (SU) attaches the virus to the host lymphoid cell by binding to the primary receptor CD4. This interaction induces a structural rearrangement creating a high affinity binding site for a chemokine coreceptor like CXCR4 and/or CCR5. This peculiar 2 stage receptor-interaction strategy allows gp120 to maintain the highly conserved coreceptor-binding site in a cryptic conformation, protected from neutralizing antibodies. Since CD4 also displays a binding site for the disulfide-isomerase P4HB/PDI, a P4HB/PDI-CD4-CXCR4-gp120 complex may form. In that complex, P4HB/PDI could reach and reduce gp120 disulfide bonds, causing major conformational changes in gp120. TXN, another PDI family member could also be involved in disulfide rearrangements in Env during fusion. These changes are transmitted to the transmembrane protein gp41 and are thought to activate its fusogenic potential by unmasking its fusion peptide. The surface protein gp120 is a ligand for CD209/DC-SIGN and CLEC4M/DC-SIGNR, which are respectively found on dendritic cells (DCs), and on endothelial cells of liver sinusoids and lymph node sinuses. These interactions allow capture of viral particles at mucosal surfaces by these cells and subsequent transmission to permissive cells. DCs are professional antigen presenting cells, critical for host immunity by inducing specific immune responses against a broad variety of pathogens. They act as sentinels in various tissues where they take up antigen, process it, and present it to T-cells following migration to lymphoid organs. HIV subverts the migration properties of dendritic cells to gain access to CD4+ T-cells in lymph nodes. Virus transmission to permissive T-cells occurs either in trans (without DCs infection, through viral capture and transmission), or in cis (following DCs productive infection, through the usual CD4-gp120 interaction), thereby inducing a robust infection. In trans infection, bound virions remain infectious over days and it is proposed that they are not degraded, but protected in non-lysosomal acidic organelles within the DCs close to the cell membrane thus contributing to the viral infectious potential during DCs' migration from the periphery to the lymphoid tissues. On arrival at lymphoid tissues, intact virions recycle back to DCs' cell surface allowing virus transmission to CD4+ T-cells. Virion capture also seems to lead to MHC-II-restricted viral antigen presentation, and probably to the activation of HIV-specific CD4+ cells. In terms of biological role, the transmembrane protein gp41 (TM) acts as a class I viral fusion protein. Under the current model, the protein has at least 3 conformational states: pre-fusion native state, pre-hairpin intermediate state, and post-fusion hairpin state. During fusion of viral and target intracellular membranes, the coiled coil regions (heptad repeats) assume a trimer-of-hairpins structure, positioning the fusion peptide in close proximity to the C-terminal region of the ectodomain. The formation of this structure appears to drive apposition and subsequent fusion of viral and target cell membranes. Complete fusion occurs in host cell endosomes and is dynamin-dependent, however some lipid transfer might occur at the plasma membrane. The virus undergoes clathrin-dependent internalization long before endosomal fusion, thus minimizing the surface exposure of conserved viral epitopes during fusion and reducing the efficacy of inhibitors targeting these epitopes. Membranes fusion leads to delivery of the nucleocapsid into the cytoplasm. Functionally, the envelope glycoprotein gp160 precursor down-modulates cell surface CD4 antigen by interacting with it in the endoplasmic reticulum and blocking its transport to the cell surface. Its function is as follows. The gp120-gp41 heterodimer seems to contribute to T-cell depletion during HIV-1 infection. The envelope glycoproteins expressed on the surface of infected cells induce apoptosis through an interaction with uninfected cells expressing the receptor (CD4) and the coreceptors CXCR4 or CCR5. This type of bystander killing may be obtained by at least three distinct mechanisms. First, the interaction between the 2 cells can induce cellular fusion followed by nuclear fusion within the syncytium. Syncytia are condemned to die from apoptosis. Second, the 2 interacting cells may not fuse entirely and simply exchange plasma membrane lipids, after a sort of hemifusion process, followed by rapid death. Third, it is possible that virus-infected cells, on the point of undergoing apoptosis, fuse with CD4-expressing cells, in which case apoptosis is rapidly transmitted from one cell to the other and thus occurs in a sort of contagious fashion. The gp120-gp41 heterodimer allows rapid transcytosis of the virus through CD4 negative cells such as simple epithelial monolayers of the intestinal, rectal and endocervical epithelial barriers. Both gp120 and gp41 specifically recognize glycosphingolipids galactosyl-ceramide (GalCer) or 3' sulfo-galactosyl-ceramide (GalS) present in the lipid rafts structures of epithelial cells. Binding to these alternative receptors allows the rapid transcytosis of the virus through the epithelial cells. This transcytotic vesicle-mediated transport of virions from the apical side to the basolateral side of the epithelial cells does not involve infection of the cells themselves. The polypeptide is Envelope glycoprotein gp160 (env) (Human immunodeficiency virus type 2 subtype A (isolate Ghana-1) (HIV-2)).